The sequence spans 309 residues: Epidermal retinol dehydrogenase 2 (309 aa).

The chain crosses the membrane as a helical span at residues 11-31 (LFIFLGKSLFSLLEAMIFALL). NADP(+) is bound at residue 44–68 (LITGAGSGLGRLLALQFARLGSVLV). Ser177 is a binding site for substrate. The active-site Proton acceptor is Tyr190. A helical membrane pass occupies residues 270–290 (LLYFMMFLKSFLPLKTGLLIA).

It belongs to the short-chain dehydrogenases/reductases (SDR) family. In terms of tissue distribution, detected in adult lung. Detected at low levels in adult brain, heart, testis, placenta, cervix, pancreas, uterus, stomach, rectum, small intestine, colon, esophagus, thymus, skin, and skin keratinocyte. Expression is higher in psoriasis lesions relative to unaffected skin from psoriasis patients. Detected in fetal kidney, skin and lung.

The protein resides in the endoplasmic reticulum membrane. The enzyme catalyses all-trans-retinol--[retinol-binding protein] + NAD(+) = all-trans-retinal--[retinol-binding protein] + NADH + H(+). It functions in the pathway cofactor metabolism; retinol metabolism. In terms of biological role, oxidoreductase with strong preference for NAD. Active in both the oxidative and reductive directions. Oxidizes all-trans-retinol in all-trans-retinaldehyde. No activity was detected with 11-cis-retinol or 11-cis-retinaldehyde as substrates with either NAD(+)/NADH or NADP(+)/NADPH. In Homo sapiens (Human), this protein is Epidermal retinol dehydrogenase 2.